Here is a 135-residue protein sequence, read N- to C-terminus: Ig heavy chain V region XIG14 (135 aa).

The signal sequence occupies residues 1 to 18; it reads DFIIFFIFMFFSPSCILS. The 109-residue stretch at 20–128 folds into the Ig-like domain; sequence TLQESGPGTV…GYNFDYWGQG (109 aa).

The sequence is that of Ig heavy chain V region XIG14 from Xenopus laevis (African clawed frog).